Reading from the N-terminus, the 619-residue chain is Grainyhead-like protein 2 homolog (619 aa).

Positions 1 to 90 (MSQETDNKRL…KINEGHEDQD (90 aa)) are transcription activation. Disordered regions lie at residues 86–108 (HEDQ…STGE), 125–147 (NDTV…PQPA), and 423–444 (EERK…CNNS). Over residues 99 to 108 (ETPSNLSTGE) the composition is skewed to polar residues. One can recognise a Grh/CP2 DB domain in the interval 239-477 (ASSTFQYTLE…DLDVQPVLFI (239 aa)).

It belongs to the grh/CP2 family. Grainyhead subfamily.

Its subcellular location is the nucleus. It is found in the membrane. Transcription factor playing an important role in primary neurulation and in epithelial development. Binds directly to the consensus DNA sequence 5'-AACCGGTT-3' acting as an activator and repressor on distinct target genes. This Xenopus tropicalis (Western clawed frog) protein is Grainyhead-like protein 2 homolog (grhl2).